The following is a 368-amino-acid chain: Germination protease (368 aa).

Residues 1-16 constitute a propeptide that is removed on maturation; it reads MEKKKLDLSQYAVRTD.

This sequence belongs to the peptidase A25 family. In terms of assembly, homotetramer. Autoproteolytically processed. The inactive tetrameric zymogen termed p46 autoprocesses to a smaller form termed p41, which is active only during spore germination.

It catalyses the reaction Endopeptidase action with P4 Glu or Asp, P1 preferably Glu &gt; Asp, P1' hydrophobic and P2' Ala.. Functionally, initiates the rapid degradation of small, acid-soluble proteins during spore germination. The sequence is that of Germination protease from Bacillus licheniformis (strain ATCC 14580 / DSM 13 / JCM 2505 / CCUG 7422 / NBRC 12200 / NCIMB 9375 / NCTC 10341 / NRRL NRS-1264 / Gibson 46).